The sequence spans 25 residues: Acyl carrier protein (25 aa).

The region spanning 2–25 (ESIEQRVKKIVAEQLGVAEAEIKA) is the Carrier domain.

It belongs to the acyl carrier protein (ACP) family. In terms of processing, 4'-phosphopantetheine is transferred from CoA to a specific serine of apo-ACP by AcpS. This modification is essential for activity because fatty acids are bound in thioester linkage to the sulfhydryl of the prosthetic group.

The protein localises to the cytoplasm. The protein operates within lipid metabolism; fatty acid biosynthesis. Carrier of the growing fatty acid chain in fatty acid biosynthesis. In Alcaligenes faecalis, this protein is Acyl carrier protein (acpP).